The following is an 86-amino-acid chain: Large ribosomal subunit protein bL27 (86 aa).

It belongs to the bacterial ribosomal protein bL27 family.

This Koribacter versatilis (strain Ellin345) protein is Large ribosomal subunit protein bL27.